Consider the following 369-residue polypeptide: GTPase Obg (369 aa).

The Obg domain occupies Met1–Leu159. An OBG-type G domain is found at Ala160–Ala334. GTP is bound by residues Gly166–Ser173, Phe191–His195, Asp213–Gly216, Asn284–Asp287, and Ser315–Leu317. Positions 173 and 193 each coordinate Mg(2+). The tract at residues Gln339–Arg369 is disordered.

This sequence belongs to the TRAFAC class OBG-HflX-like GTPase superfamily. OBG GTPase family. As to quaternary structure, monomer. The cofactor is Mg(2+).

The protein resides in the cytoplasm. Functionally, an essential GTPase which binds GTP, GDP and possibly (p)ppGpp with moderate affinity, with high nucleotide exchange rates and a fairly low GTP hydrolysis rate. Plays a role in control of the cell cycle, stress response, ribosome biogenesis and in those bacteria that undergo differentiation, in morphogenesis control. This is GTPase Obg from Leptothrix cholodnii (strain ATCC 51168 / LMG 8142 / SP-6) (Leptothrix discophora (strain SP-6)).